The following is a 232-amino-acid chain: Mediator of RNA polymerase II transcription subunit 18 (232 aa).

Belongs to the Mediator complex subunit 18 family. As to quaternary structure, component of the Mediator complex.

The protein localises to the nucleus. In terms of biological role, component of the Mediator complex, a coactivator involved in the regulated transcription of nearly all RNA polymerase II-dependent genes. Mediator functions as a bridge to convey information from gene-specific regulatory proteins to the basal RNA polymerase II transcription machinery. Mediator is recruited to promoters by direct interactions with regulatory proteins and serves as a scaffold for the assembly of a functional preinitiation complex with RNA polymerase II and the general transcription factors. This is Mediator of RNA polymerase II transcription subunit 18 (mdt-18) from Caenorhabditis elegans.